Reading from the N-terminus, the 114-residue chain is Ribonuclease P protein component (114 aa).

This sequence belongs to the RnpA family. In terms of assembly, consists of a catalytic RNA component (M1 or rnpB) and a protein subunit.

It catalyses the reaction Endonucleolytic cleavage of RNA, removing 5'-extranucleotides from tRNA precursor.. Its function is as follows. RNaseP catalyzes the removal of the 5'-leader sequence from pre-tRNA to produce the mature 5'-terminus. It can also cleave other RNA substrates such as 4.5S RNA. The protein component plays an auxiliary but essential role in vivo by binding to the 5'-leader sequence and broadening the substrate specificity of the ribozyme. In Buchnera aphidicola subsp. Schizaphis graminum (strain Sg), this protein is Ribonuclease P protein component.